Reading from the N-terminus, the 139-residue chain is ATP synthase epsilon chain (139 aa).

Belongs to the ATPase epsilon chain family. F-type ATPases have 2 components, CF(1) - the catalytic core - and CF(0) - the membrane proton channel. CF(1) has five subunits: alpha(3), beta(3), gamma(1), delta(1), epsilon(1). CF(0) has three main subunits: a, b and c.

It is found in the cell inner membrane. Its function is as follows. Produces ATP from ADP in the presence of a proton gradient across the membrane. The protein is ATP synthase epsilon chain of Serratia proteamaculans (strain 568).